Consider the following 398-residue polypeptide: Ras-related GTP-binding protein C (398 aa).

Positions 1–56 (MSLQYGAEETPLAGSYGAADSFPKDFGYGVEEEEEEAAAGGGGGAGAGGGCGPGGA) are disordered. An N-acetylserine modification is found at Ser2. Residues Ser2 and Ser15 each carry the phosphoserine modification. The span at 39-55 (AGGGGGAGAGGGCGPGG) shows a compositional bias: gly residues. Positions 70, 71, 72, 73, 74, and 75 each coordinate GDP. A GTP-binding site is contributed by Lys73. Positions 89 and 95 each coordinate GTP. Thr95 carries the phosphothreonine modification. Residues His177, Lys178, Asp180, and Ile219 each contribute to the GDP site. GTP is bound at residue Asp180.

This sequence belongs to the GTR/RAG GTP-binding protein family. In terms of assembly, forms a heterodimer with RRAGA, in a sequence-independent manner, and RRAGB. Heterodimerization stabilizes proteins of the heterodimer. The GDP-bound form of RRAGC (in complex with the GTP-bound form of RRAGA or RRAGB), interacts with RPTOR, thereby promoting recruitment of mTORC1 to the lysosomes. Component of the lysosomal folliculin complex (LFC), composed of FLCN, FNIP1 (or FNIP2), RagA/RRAGA or RagB/RRAGB GDP-bound, RagC/RRAGC or RagD/RRAGD GTP-bound, and Ragulator. Interacts with NOL8. Interacts with SH3BP4; the interaction with this negative regulator is most probably direct, preferentially occurs with the inactive GDP-bound form of RRAGB, is negatively regulated by amino acids and prevents interaction with RPTOR. The Rag heterodimer interacts with SLC38A9; the probable amino acid sensor. Interacts with SESN1, SESN2 and SESN3. Interacts with PIP4P1. The GDP-bound form interacts with TFEB. The GDP-bound form interacts with TFE3. As to expression, expressed most abundantly in kidney. Moderately expressed in brain, ovary, and testis, and detected at lower levels in heart, liver, and muscle. Not detected in lung, spleen, and small intestine. Widely expressed in tumor cells, with expression being specifically up-regulated in highly metastatic cells.

It is found in the cytoplasm. It localises to the nucleus. Its subcellular location is the lysosome membrane. The enzyme catalyses GTP + H2O = GDP + phosphate + H(+). Its activity is regulated as follows. The activation of RagC/RRAGC is mediated by a GTPase activating protein (GAP). In high-amino acid conditions, activated by GTPase activating protein FLCN that stimulates RRAGC GTPase activity to turn it into its active GDP-bound form. In response to amino acid depletion, the GATOR1 complex inactivates RagC/RRAGC by securing the GTP-bound inactive form. In terms of biological role, guanine nucleotide-binding protein that plays a crucial role in the cellular response to amino acid availability through regulation of the mTORC1 signaling cascade. Forms heterodimeric Rag complexes with RagA/RRAGA or RagB/RRAGB and cycles between an inactive GTP-bound and an active GDP-bound form: RagC/RRAGC is in its active form when GDP-bound RagC/RRAGC forms a complex with GTP-bound RagA/RRAGA (or RagB/RRAGB) and in an inactive form when GTP-bound RagC/RRAGC heterodimerizes with GDP-bound RagA/RRAGA (or RagB/RRAGB). In its GDP-bound active form, promotes the recruitment of mTORC1 to the lysosomes and its subsequent activation by the GTPase RHEB. This is a crucial step in the activation of the MTOR signaling cascade by amino acids. Also plays a central role in the non-canonical mTORC1 complex, which acts independently of RHEB and specifically mediates phosphorylation of MiT/TFE factors TFEB and TFE3: GDP-bound RagC/RRAGC mediates recruitment of MiT/TFE factors TFEB and TFE3. In Mus musculus (Mouse), this protein is Ras-related GTP-binding protein C.